The chain runs to 360 residues: Aminomethyltransferase (360 aa).

This sequence belongs to the GcvT family. In terms of assembly, the glycine cleavage system is composed of four proteins: P, T, L and H.

It catalyses the reaction N(6)-[(R)-S(8)-aminomethyldihydrolipoyl]-L-lysyl-[protein] + (6S)-5,6,7,8-tetrahydrofolate = N(6)-[(R)-dihydrolipoyl]-L-lysyl-[protein] + (6R)-5,10-methylene-5,6,7,8-tetrahydrofolate + NH4(+). The glycine cleavage system catalyzes the degradation of glycine. The chain is Aminomethyltransferase from Legionella pneumophila (strain Lens).